The sequence spans 249 residues: Exosome complex component Rrp4 (249 aa).

The 72-residue stretch at 72–143 folds into the S1 motif domain; sequence GDTIIGLVED…RTISPVLTVK (72 aa). Residues 151 to 213 form the KH domain; that stretch reads PLGTVMDIMP…EALIEAINII (63 aa).

Belongs to the RRP4 family. In terms of assembly, component of the archaeal exosome complex. Forms a trimer of Rrp4 and/or Csl4 subunits. The trimer associates with a hexameric ring-like arrangement composed of 3 Rrp41-Rrp42 heterodimers.

The protein resides in the cytoplasm. Its function is as follows. Non-catalytic component of the exosome, which is a complex involved in RNA degradation. Increases the RNA binding and the efficiency of RNA degradation. Confers strong poly(A) specificity to the exosome. The chain is Exosome complex component Rrp4 from Sulfolobus acidocaldarius (strain ATCC 33909 / DSM 639 / JCM 8929 / NBRC 15157 / NCIMB 11770).